A 412-amino-acid polypeptide reads, in one-letter code: 8-amino-7-oxononanoate synthase (412 aa).

Position 28 (Arg-28) interacts with substrate. 115 to 116 (GY) contributes to the pyridoxal 5'-phosphate binding site. Residue His-140 coordinates substrate. 3 residues coordinate pyridoxal 5'-phosphate: Ser-186, His-214, and Thr-246. N6-(pyridoxal phosphate)lysine is present on Lys-249. Thr-367 provides a ligand contact to substrate.

This sequence belongs to the class-II pyridoxal-phosphate-dependent aminotransferase family. BioF subfamily. Homodimer. Requires pyridoxal 5'-phosphate as cofactor.

The enzyme catalyses 6-carboxyhexanoyl-[ACP] + L-alanine + H(+) = (8S)-8-amino-7-oxononanoate + holo-[ACP] + CO2. Its pathway is cofactor biosynthesis; biotin biosynthesis. Functionally, catalyzes the decarboxylative condensation of pimeloyl-[acyl-carrier protein] and L-alanine to produce 8-amino-7-oxononanoate (AON), [acyl-carrier protein], and carbon dioxide. This chain is 8-amino-7-oxononanoate synthase, found in Paracidovorax citrulli (strain AAC00-1) (Acidovorax citrulli).